A 396-amino-acid polypeptide reads, in one-letter code: Stearoyl-[acyl-carrier-protein] 9-desaturase, chloroplastic (396 aa).

The N-terminal 33 residues, 1–33 (MAIRINTATFQSDLYRSFAFPQPKPLRSPKFAM), are a transit peptide targeting the chloroplast. Fe cation-binding residues include glutamate 138, glutamate 176, histidine 179, glutamate 229, glutamate 262, and histidine 265.

It belongs to the fatty acid desaturase type 2 family. Homodimer. The cofactor is Fe(2+).

It localises to the plastid. The protein resides in the chloroplast. It carries out the reaction octadecanoyl-[ACP] + 2 reduced [2Fe-2S]-[ferredoxin] + O2 + 2 H(+) = (9Z)-octadecenoyl-[ACP] + 2 oxidized [2Fe-2S]-[ferredoxin] + 2 H2O. It participates in lipid metabolism; fatty acid metabolism. Functionally, converts stearoyl-ACP to oleoyl-ACP by introduction of a cis double bond between carbons 9 and 10 of the acyl chain. The sequence is that of Stearoyl-[acyl-carrier-protein] 9-desaturase, chloroplastic from Helianthus annuus (Common sunflower).